The following is a 2378-amino-acid chain: Serine/threonine-protein kinase ATM (2378 aa).

The 523-residue stretch at 1415–1937 (LSARKRNTMM…LHTILMYDDE (523 aa)) folds into the FAT domain. The PI3K/PI4K catalytic domain occupies 2044-2366 (WKDVFTIADG…LLREATSADN (323 aa)). The tract at residues 2050 to 2056 (IADGIST) is G-loop. Residues 2218 to 2226 (GLGDRHASN) are catalytic loop. Residues 2238–2263 (HIDLGMILEYSKRTLPVPEQVPFRIT) form an activation loop region. One can recognise an FATC domain in the interval 2346–2378 (TAQSSNLQIRRLLREATSADNLSRMFCGWMPFL).

The protein belongs to the PI3/PI4-kinase family. ATM subfamily.

Its subcellular location is the nucleus. It carries out the reaction L-seryl-[protein] + ATP = O-phospho-L-seryl-[protein] + ADP + H(+). The enzyme catalyses L-threonyl-[protein] + ATP = O-phospho-L-threonyl-[protein] + ADP + H(+). Serine/threonine protein kinase which activates checkpoint signaling in the presence of DNA double strand breaks (DSBs) and other forms of DNA damage induced by ionizing radiation and other genotoxic stresses such as UV. Plays a role in maintaining genome stability. This Caenorhabditis elegans protein is Serine/threonine-protein kinase ATM (atm-1).